A 320-amino-acid polypeptide reads, in one-letter code: Homoserine kinase (320 aa).

100 to 110 (PLSSGMGSSAA) contacts ATP.

The protein belongs to the GHMP kinase family. Homoserine kinase subfamily.

The protein resides in the cytoplasm. It carries out the reaction L-homoserine + ATP = O-phospho-L-homoserine + ADP + H(+). The protein operates within amino-acid biosynthesis; L-threonine biosynthesis; L-threonine from L-aspartate: step 4/5. In terms of biological role, catalyzes the ATP-dependent phosphorylation of L-homoserine to L-homoserine phosphate. This Chlorobium phaeobacteroides (strain BS1) protein is Homoserine kinase.